Here is a 136-residue protein sequence, read N- to C-terminus: Putative pre-16S rRNA nuclease (136 aa).

Belongs to the YqgF nuclease family.

It is found in the cytoplasm. Its function is as follows. Could be a nuclease involved in processing of the 5'-end of pre-16S rRNA. The polypeptide is Putative pre-16S rRNA nuclease (Francisella tularensis subsp. mediasiatica (strain FSC147)).